We begin with the raw amino-acid sequence, 121 residues long: Peptidyl-tRNA hydrolase (121 aa).

This sequence belongs to the PTH2 family.

The protein localises to the cytoplasm. It catalyses the reaction an N-acyl-L-alpha-aminoacyl-tRNA + H2O = an N-acyl-L-amino acid + a tRNA + H(+). Its function is as follows. The natural substrate for this enzyme may be peptidyl-tRNAs which drop off the ribosome during protein synthesis. This chain is Peptidyl-tRNA hydrolase, found in Staphylothermus marinus (strain ATCC 43588 / DSM 3639 / JCM 9404 / F1).